A 293-amino-acid chain; its full sequence is Probable 2-(5''-triphosphoribosyl)-3'-dephosphocoenzyme-A synthase (293 aa).

The protein belongs to the CitG/MdcB family.

The catalysed reaction is 3'-dephospho-CoA + ATP = 2'-(5''-triphospho-alpha-D-ribosyl)-3'-dephospho-CoA + adenine. Functionally, involved in the formation of 2-(5''-phosphoribosyl)-3'-dephosphocoenzyme-A, the prosthetic group of the acyl-carrier protein of the malonate decarboxylase. This Pseudomonas aeruginosa (strain UCBPP-PA14) protein is Probable 2-(5''-triphosphoribosyl)-3'-dephosphocoenzyme-A synthase.